A 689-amino-acid chain; its full sequence is MDIKDYYCVETKDSKQPGESYIYRSIHSAGKLLDTPEDGVSTVYDLLCTAAKNHGEKQAMGSRKLIKENREEREIIRKVDNEEVVEKKLWTTYELGPYEYISFNKVYEIALALGSGLVASGITSETTMLFFAATSAKWFTTAQGCSSQAIPIVTAYETLGEDGIYTSLDECKSRAIFTDPNLIPKLLGPLKQSTWVKLIVCSSTPSEDLVELVKSTAPDVEIITYDNLLSLGKEKPQPPHPPKADDICCYMYTSGSTGKPKGVVLLHRNIIAALGGINRILSQHINVKDYVLAYLPLAHIFEFIFEMCCLYWGGVLGYASPRTLTDASVVNCKGDLTEFRPTVLIGVPAVYELIKKGILAKVSSMPAHRQKVFSGSLSLKQYLIERNLPGSAALDAIVFNKVKAATGGRLRYCISGGAALAASTQAFLSSCICPVLPGYGLTETCAGSFVLSPEQWHLYANTVGFPIPSIEFKLVDIPDLGYYTDSSPPRGEVWIRGPAVCNGYLNRPEDNKAAFTEDGWFKTGDVGEIAKGNTLRLIDRKKNIVKSLNGEYIALEKIEAQFFTSPLVSNVCAYADVNHAKPVVIVNPDENGLRTYLTKNSGSSFNGNPNDTLTNLCKDSGVQHLILKELINIGKQQRLASIEIPEGVVLSDFEWTAENNFLTASRKVKRQVIVAHYSDEIQKAYSKKH.

252–263 is a binding site for ATP; the sequence is YTSGSTGKPKGV. An FACS motif is present at residues 518–567; sequence DGWFKTGDVGEIAKGNTLRLIDRKKNIVKSLNGEYIALEKIEAQFFTSPL.

It belongs to the ATP-dependent AMP-binding enzyme family. Requires Mg(2+) as cofactor.

The protein localises to the golgi apparatus. Its subcellular location is the vacuole membrane. It carries out the reaction a long-chain fatty acid + ATP + CoA = a long-chain fatty acyl-CoA + AMP + diphosphate. Esterification, concomitant with transport, of endogenous long-chain fatty acids into metabolically active CoA thioesters for subsequent degradation or incorporation into phospholipids. Plays an important role in the determination of viability in the stationary phase. The sequence is that of Long-chain-fatty-acid--CoA ligase 2 (lcf2) from Schizosaccharomyces pombe (strain 972 / ATCC 24843) (Fission yeast).